The following is a 110-amino-acid chain: SOSS complex subunit C (110 aa).

The protein belongs to the SOSS-C family. In terms of assembly, belongs to the multiprotein complex Integrator. Component of the SOSS complex, composed of soss-b (soss-b1/nabp2 or soss-b2/nabp1), soss-a/ints3 and soss-c/inip.

Its subcellular location is the nucleus. Component of the SOSS complex, a multiprotein complex that functions downstream of the MRN complex to promote DNA repair and G2/M checkpoint. The SOSS complex associates with single-stranded DNA at DNA lesions and influences diverse endpoints in the cellular DNA damage response including cell-cycle checkpoint activation, recombinational repair and maintenance of genomic stability. Required for efficient homologous recombination-dependent repair of double-strand breaks (DSBs). In Xenopus laevis (African clawed frog), this protein is SOSS complex subunit C (inip).